The sequence spans 221 residues: NEP1-interacting protein-like 1 (221 aa).

Transmembrane regions (helical) follow at residues 35–55 (LFTFFFALVGTLLGALTGALI), 69–89 (VGAISGAVFSIEVFESSLLLW), and 95–115 (GIGCLLYLIDVIASLLSGRLV). The RING-type; atypical zinc-finger motif lies at 176-218 (CSVCLQDFQVGETVRSLPHCHHMFHLPCIDKWLRRHASCPLCR).

Belongs to the RING-type zinc finger family. NIP subfamily.

It is found in the membrane. Functionally, may be involved in the early steps of the plant defense signaling pathway. The polypeptide is NEP1-interacting protein-like 1 (ATL27) (Arabidopsis thaliana (Mouse-ear cress)).